The following is a 541-amino-acid chain: Protein wntless homolog (541 aa).

The signal sequence occupies residues 1–42 (MAGAIIENMSTRKLCIVGGILLVFQVIAFLVGGLIAPSPTTA). At 43-232 (VPYMSVKCID…GIHQNGGFTK (190 aa)) the chain is on the lumenal side. The chain crosses the membrane as a helical span at residues 233–253 (VWFAMKTFLTPSILIIMVWYW). Residues 254–268 (RRITLMTRAPVLLEK) lie on the Cytoplasmic side of the membrane. Residues 269–289 (VIFALGISMTFINIPVEWFSI) form a helical membrane-spanning segment. At 290-303 (GFDWTWMLLFGDIR) the chain is on the lumenal side. Residues 304 to 324 (QGIFYAMLLSFWIIFCGEHMM) traverse the membrane as a helical segment. The Cytoplasmic portion of the chain corresponds to 325–331 (DQNERNR). The chain crosses the membrane as a helical span at residues 332–352 (LSGYWKQVGPIAVGSFCLFIF). Over 353–380 (DMCERGVQLKNPFYSIWTTEVGTELAMA) the chain is Lumenal. A helical membrane pass occupies residues 381–401 (FIIVAGICLCLYFLFLCFMVF). Residues 402-431 (QVFRNISGKQSSLPAMSKARRLHYEGLIFR) are Cytoplasmic-facing. The chain crosses the membrane as a helical span at residues 432–452 (FKFLMLITLACAAMTVIFFIV). Residues 453 to 471 (SQVTEGHWKWGDITIQVNS) lie on the Lumenal side of the membrane. The chain crosses the membrane as a helical span at residues 472–492 (AFFTGIYGMWNLYVFALMFLY). Residues 493–541 (APSHKNYGEDQSNGDLGVSSGEELQLTTTITHVDGPTEVYKLARKEAQE) are Cytoplasmic-facing.

It belongs to the wntless family.

The protein resides in the golgi apparatus membrane. The protein localises to the cytoplasmic vesicle membrane. In terms of biological role, may play an essential role in Wnt signaling pathway. May be required for Wnt-dependent patterning processes. In Gallus gallus (Chicken), this protein is Protein wntless homolog (WLS).